The primary structure comprises 90 residues: Antitoxin VapB35 (90 aa).

The disordered stretch occupies residues 53-90 (GSVQPARVHGPAPRPTIPMRGGLDSGTLLERMRAEERY).

This sequence belongs to the phD/YefM antitoxin family.

In terms of biological role, antitoxin component of a type II toxin-antitoxin (TA) system. Neutralizes the effect of cognate toxin VapC35. In Mycobacterium tuberculosis (strain CDC 1551 / Oshkosh), this protein is Antitoxin VapB35 (vapB35).